A 141-amino-acid chain; its full sequence is Small ribosomal subunit protein bS6 (141 aa).

Positions 97–141 (TGQSEMLKAEENRSERRERRDRPEHADSADGDDSDNSDASDNADE) are disordered. The span at 103 to 124 (LKAEENRSERRERRDRPEHADS) shows a compositional bias: basic and acidic residues. Acidic residues predominate over residues 125 to 141 (ADGDDSDNSDASDNADE).

The protein belongs to the bacterial ribosomal protein bS6 family.

In terms of biological role, binds together with bS18 to 16S ribosomal RNA. The polypeptide is Small ribosomal subunit protein bS6 (Pseudomonas fluorescens (strain ATCC BAA-477 / NRRL B-23932 / Pf-5)).